A 329-amino-acid chain; its full sequence is UDP-glucose 4-epimerase (329 aa).

NAD(+)-binding positions include 13–14 (YV), 33–38 (HNLSTG), 53–54 (DI), 76–80 (FAAFS), Asn95, Thr120, Tyr144, Lys148, and Phe172. Substrate-binding residues include Thr120 and Tyr144. The active-site Proton acceptor is the Tyr144. Substrate-binding positions include Asn173, 190-191 (HL), 207-209 (SVY), Arg221, and 281-284 (RGRD).

The protein belongs to the NAD(P)-dependent epimerase/dehydratase family. As to quaternary structure, homodimer. Requires NAD(+) as cofactor.

The catalysed reaction is UDP-alpha-D-glucose = UDP-alpha-D-galactose. It participates in carbohydrate metabolism; galactose metabolism. Involved in the metabolism of galactose. Catalyzes the conversion of UDP-galactose (UDP-Gal) to UDP-glucose (UDP-Glc) through a mechanism involving the transient reduction of NAD. The sequence is that of UDP-glucose 4-epimerase (galE) from Streptomyces lividans.